Reading from the N-terminus, the 217-residue chain is RNA chaperone ProQ (217 aa).

The disordered stretch occupies residues 105–166 (EAKARVQAQR…PREEQHTPVS (62 aa)). Residues 121-131 (KRERKPRPTTP) are compositionally biased toward basic residues. A compositionally biased stretch (basic and acidic residues) spans 132–162 (RRKEGAERKPRAQKPVEKAPKTVKAPREEQH).

This sequence belongs to the ProQ family.

It is found in the cytoplasm. Functionally, RNA chaperone with significant RNA binding, RNA strand exchange and RNA duplexing activities. May regulate ProP activity through an RNA-based, post-transcriptional mechanism. This is RNA chaperone ProQ from Escherichia coli O8 (strain IAI1).